Consider the following 212-residue polypeptide: Ribonuclease HII (212 aa).

The RNase H type-2 domain maps to 22–212 (ILIAGLDEAG…APLKGMIDGL (191 aa)). 3 residues coordinate a divalent metal cation: D28, E29, and D123.

It belongs to the RNase HII family. The cofactor is Mn(2+). Mg(2+) serves as cofactor.

It localises to the cytoplasm. The catalysed reaction is Endonucleolytic cleavage to 5'-phosphomonoester.. Its function is as follows. Endonuclease that specifically degrades the RNA of RNA-DNA hybrids. The chain is Ribonuclease HII from Dehalococcoides mccartyi (strain ATCC BAA-2100 / JCM 16839 / KCTC 5957 / BAV1).